A 230-amino-acid chain; its full sequence is Large ribosomal subunit protein uL3 (230 aa).

2 disordered regions span residues 125–149 (QAIG…SLGD) and 210–230 (PNPK…VKNE).

This sequence belongs to the universal ribosomal protein uL3 family. As to quaternary structure, part of the 50S ribosomal subunit. Forms a cluster with proteins L14 and L19.

In terms of biological role, one of the primary rRNA binding proteins, it binds directly near the 3'-end of the 23S rRNA, where it nucleates assembly of the 50S subunit. This is Large ribosomal subunit protein uL3 from Mesomycoplasma hyopneumoniae (strain 232) (Mycoplasma hyopneumoniae).